The sequence spans 281 residues: DSC E3 ubiquitin ligase complex subunit 4 (281 aa).

4 helical membrane-spanning segments follow: residues 22–42 (LCYA…LLLL), 62–82 (LPLF…RMFF), 84–104 (LPTA…INFI), and 115–135 (FITS…ILIA). Residues 145 to 154 (HIQASQSGLS) are compositionally biased toward polar residues. Disordered stretches follow at residues 145–183 (HIQA…EDLQ) and 256–281 (NTNS…TNPI). Over residues 157–167 (DGDEEPSDLIT) the composition is skewed to acidic residues. A compositionally biased stretch (basic and acidic residues) spans 168–183 (EDSRDTQQGQRQEDLQ).

In terms of assembly, component of the DSC E3 ubiquitin ligase complex composed of dsc1, dsc2, dsc3 and dsc4.

Its subcellular location is the endoplasmic reticulum membrane. It is found in the golgi apparatus membrane. The protein operates within protein modification; protein ubiquitination. Its function is as follows. Component of the DSC E3 ubiquitin ligase complex which is required for the sre1 transcriptional activator proteolytic cleavage to release the soluble transcription factor from the membrane in low oxygen or sterol conditions. The complex also plays an important role in the multivesicular body (MVB) pathway and functions in a post-endoplasmic reticulum pathway for protein degradation. The protein is DSC E3 ubiquitin ligase complex subunit 4 (dsc4) of Schizosaccharomyces pombe (strain 972 / ATCC 24843) (Fission yeast).